The following is a 340-amino-acid chain: Uroporphyrinogen decarboxylase (340 aa).

Residues 23 to 27 (RQAGR), Asp72, Tyr147, Thr202, and His316 contribute to the substrate site.

It belongs to the uroporphyrinogen decarboxylase family. As to quaternary structure, homodimer.

Its subcellular location is the cytoplasm. It carries out the reaction uroporphyrinogen III + 4 H(+) = coproporphyrinogen III + 4 CO2. It participates in porphyrin-containing compound metabolism; protoporphyrin-IX biosynthesis; coproporphyrinogen-III from 5-aminolevulinate: step 4/4. Functionally, catalyzes the decarboxylation of four acetate groups of uroporphyrinogen-III to yield coproporphyrinogen-III. This is Uroporphyrinogen decarboxylase from Trichlorobacter lovleyi (strain ATCC BAA-1151 / DSM 17278 / SZ) (Geobacter lovleyi).